Here is an 833-residue protein sequence, read N- to C-terminus: Prickle-like protein 1 (833 aa).

The disordered stretch occupies residues 1-22 (MPLEMDQKISKHTFGCQRSSTS). Residues 14–122 (FGCQRSSTSD…NIKMLSRAVM (109 aa)) form the PET domain. LIM zinc-binding domains lie at 124–188 (AMCE…ELLK), 189–249 (PRCS…HYAE), and 250–313 (YCES…EDVH). 5 disordered regions span residues 312–346 (VHASDSSDSAFQSARSRESRRSVRMGKSSRSADQC), 432–456 (EDNRSNEHWMSDNIKGKNDLQRNSR), 603–702 (CQEK…ERNP), 767–786 (CSSSSSDSEEEGYFLGQPIP), and 805–833 (NALSSSQFSQRTTKSKKKKGHKGKNCIIS). Basic and acidic residues-rich tracts occupy residues 432–453 (EDNRSNEHWMSDNIKGKNDLQR) and 603–614 (CQEKPPPEEKPM). A compositionally biased stretch (basic residues) spans 669–680 (RPHHHRRRKSRK). Residues 817–833 (TKSKKKKGHKGKNCIIS) show a composition bias toward basic residues. Cys-830 is subject to Cysteine methyl ester. Cys-830 carries S-farnesyl cysteine lipidation. The propeptide at 831-833 (IIS) is removed in mature form.

Belongs to the prickle / espinas / testin family. In terms of assembly, interacts with dvl2/dsh and mapk8/jnk1.

It is found in the cell membrane. Acts in a planar cell polarity (PCP) complex; polarization along the apical/basal axis of epithelial cells. Regulates the polarized assembly of fibronectrin on the surface of the mesoderm during gastrulation. Essential for gastrulation cell movements, cooperating with dvl2/dsh to activate jnk. Acts together with tes to control axial elongation. The chain is Prickle-like protein 1 from Xenopus tropicalis (Western clawed frog).